The primary structure comprises 163 residues: Transcription elongation factor GreB (163 aa).

The stretch at 54 to 76 (GKRRMREIDRRIRFLTKRLEAAV) forms a coiled coil.

Belongs to the GreA/GreB family. GreB subfamily.

Functionally, necessary for efficient RNA polymerase transcription elongation past template-encoded arresting sites. The arresting sites in DNA have the property of trapping a certain fraction of elongating RNA polymerases that pass through, resulting in locked ternary complexes. Cleavage of the nascent transcript by cleavage factors such as GreA or GreB allows the resumption of elongation from the new 3'terminus. GreB releases sequences of up to 9 nucleotides in length. This is Transcription elongation factor GreB from Neisseria meningitidis serogroup B (strain ATCC BAA-335 / MC58).